Here is a 159-residue protein sequence, read N- to C-terminus: Probable cyclic pyranopterin monophosphate synthase (159 aa).

Residues 75 to 77 (LCH) and 111 to 112 (ME) contribute to the substrate site. Aspartate 126 is a catalytic residue.

It belongs to the MoaC family. As to quaternary structure, homohexamer; trimer of dimers.

The catalysed reaction is (8S)-3',8-cyclo-7,8-dihydroguanosine 5'-triphosphate = cyclic pyranopterin phosphate + diphosphate. It functions in the pathway cofactor biosynthesis; molybdopterin biosynthesis. Catalyzes the conversion of (8S)-3',8-cyclo-7,8-dihydroguanosine 5'-triphosphate to cyclic pyranopterin monophosphate (cPMP). This is Probable cyclic pyranopterin monophosphate synthase from Pyrococcus abyssi (strain GE5 / Orsay).